The following is a 194-amino-acid chain: Orotate phosphoribosyltransferase (194 aa).

Residue 117–125 (EDIVTTGLS) participates in 5-phospho-alpha-D-ribose 1-diphosphate binding. Orotate-binding residues include Thr121 and Arg149.

This sequence belongs to the purine/pyrimidine phosphoribosyltransferase family. PyrE subfamily. Homodimer. It depends on Mg(2+) as a cofactor.

The enzyme catalyses orotidine 5'-phosphate + diphosphate = orotate + 5-phospho-alpha-D-ribose 1-diphosphate. It functions in the pathway pyrimidine metabolism; UMP biosynthesis via de novo pathway; UMP from orotate: step 1/2. Functionally, catalyzes the transfer of a ribosyl phosphate group from 5-phosphoribose 1-diphosphate to orotate, leading to the formation of orotidine monophosphate (OMP). In Parvibaculum lavamentivorans (strain DS-1 / DSM 13023 / NCIMB 13966), this protein is Orotate phosphoribosyltransferase.